A 455-amino-acid polypeptide reads, in one-letter code: 5'-nucleotidase domain-containing protein 1 (455 aa).

The Nucleophile role is filled by Asp-16. Mg(2+) contacts are provided by Asp-16 and Asp-18. Asp-18 serves as the catalytic Proton donor. At Lys-171 the chain carries N6-acetyllysine. A Mg(2+)-binding site is contributed by Asp-313. The segment covering Gly-339–Lys-364 has biased composition (basic and acidic residues). The disordered stretch occupies residues Gly-339–Leu-368.

It belongs to the 5'(3')-deoxyribonucleotidase family.

In Homo sapiens (Human), this protein is 5'-nucleotidase domain-containing protein 1 (NT5DC1).